A 313-amino-acid polypeptide reads, in one-letter code: Porphobilinogen deaminase (313 aa).

C242 is modified (S-(dipyrrolylmethanemethyl)cysteine).

This sequence belongs to the HMBS family. Monomer. It depends on dipyrromethane as a cofactor.

It catalyses the reaction 4 porphobilinogen + H2O = hydroxymethylbilane + 4 NH4(+). It functions in the pathway porphyrin-containing compound metabolism; protoporphyrin-IX biosynthesis; coproporphyrinogen-III from 5-aminolevulinate: step 2/4. Tetrapolymerization of the monopyrrole PBG into the hydroxymethylbilane pre-uroporphyrinogen in several discrete steps. In Escherichia coli (strain K12 / MC4100 / BW2952), this protein is Porphobilinogen deaminase.